Reading from the N-terminus, the 677-residue chain is MSKYYLKAPYQPKGDQPKAITKLVDGVNSGREYQTLLGATGTGKTFTIANVIAKTGRPALVLAHNKTLAAQLCNELREFFPNNAVEYFISYYDYYQPEAYVPVSDTYIAKTSSINEEIDMLRHSATRSLFERDDVIVVASISCIYGLGIPSEYLKASVKFKVGNEINLRKSLRELVANQYFRNDFDIGRGKFRVKGDVLEIGPAYDDRLVRIELFGDEIEAIRYVDPITGEILDSLNCISIYPAKHFVTPKERLVTAIDDIQKELKEQLDFFNKEGKLLEAQRLEQRTKYDLEMLREVGYCNGVENYARHLSGREAGSPPECLIDYFPKDWLLVIDESHVTCSQLLAMYNGDQSRKKVLIEHGFRLPSAADNRPLKSQEFWNKANQTVFISATPGNWELEISSGAIIEQVIRPTGVLDPLVEVRPTKGQVEDLLDEIRERSRKKQRVLITTLTKRMAEDLTDYLSENDVRVRYLHSEIHSIERIEIIQDLRMGEYDVLVGVNLLREGLDLPEVSLVVILDADKEGFLRAERSLIQTIGRAARHIEGKALLYADNFTDSMKKAIEETERRRAIQESYNQQNNIVPMPAGKKANNSILSFLELSRRVQKDGIDNDLVEIAGNVVDEFKFNNNSELAIENLPQLIDELETKMKKSAKDLDFENAAKLRDKIHQLRKKLIR.

A Helicase ATP-binding domain is found at 25-412 (DGVNSGREYQ…SGAIIEQVIR (388 aa)). Residue 38-45 (GATGTGKT) coordinates ATP. The Beta-hairpin motif lies at 91–114 (YYDYYQPEAYVPVSDTYIAKTSSI). The region spanning 429-591 (QVEDLLDEIR…IVPMPAGKKA (163 aa)) is the Helicase C-terminal domain. The 36-residue stretch at 639–674 (PQLIDELETKMKKSAKDLDFENAAKLRDKIHQLRKK) folds into the UVR domain.

Belongs to the UvrB family. In terms of assembly, forms a heterotetramer with UvrA during the search for lesions. Interacts with UvrC in an incision complex.

The protein localises to the cytoplasm. Functionally, the UvrABC repair system catalyzes the recognition and processing of DNA lesions. A damage recognition complex composed of 2 UvrA and 2 UvrB subunits scans DNA for abnormalities. Upon binding of the UvrA(2)B(2) complex to a putative damaged site, the DNA wraps around one UvrB monomer. DNA wrap is dependent on ATP binding by UvrB and probably causes local melting of the DNA helix, facilitating insertion of UvrB beta-hairpin between the DNA strands. Then UvrB probes one DNA strand for the presence of a lesion. If a lesion is found the UvrA subunits dissociate and the UvrB-DNA preincision complex is formed. This complex is subsequently bound by UvrC and the second UvrB is released. If no lesion is found, the DNA wraps around the other UvrB subunit that will check the other stand for damage. This is UvrABC system protein B from Prochlorococcus marinus (strain SARG / CCMP1375 / SS120).